The following is a 110-amino-acid chain: Period circadian protein (110 aa).

Positions 23–97 are disordered; that stretch reads VTNTSIAGTG…GGAGGGGGVT (75 aa). A run of 12 repeats spans residues 30 to 31, 33 to 34, 36 to 37, 38 to 39, 40 to 41, 42 to 43, 44 to 45, 46 to 47, 48 to 49, 50 to 51, 52 to 53, and 54 to 55. A compositionally biased stretch (gly residues) spans 30–63; the sequence is GTGGTGGTGTGTGTGTGTGTGTGTGTDTGTGTGT. The tract at residues 30 to 79 is 24 X 2 AA approximate tandem repeats of G-T; the sequence is GTGGTGGTGTGTGTGTGTGTGTGTGTDTGTGTGTRNGTNSGTNSGTRTGT. Residues 56-57 form a 13; approximate repeat; that stretch reads DT. 3 consecutive repeat copies span residues 58–59, 60–61, and 62–63. The stretch at 64 to 65 is one 17; approximate repeat; sequence RN. The span at 64 to 83 shows a compositional bias: low complexity; sequence RNGTNSGTNSGTRTGTASSY. Residues 66 to 67 form repeat 18; sequence GT. Residues 68–69 form a 19; approximate repeat; it reads NS. Residues 70 to 71 form repeat 20; sequence GT. The 21; approximate repeat unit spans residues 72-73; that stretch reads NS. Residues 74–75 form repeat 22; sequence GT. A 23; approximate repeat occupies 76 to 77; it reads RT. Copy 24 of the repeat occupies 78–79; sequence GT. Gly residues predominate over residues 84–96; sequence RGGGGGAGGGGGV.

Forms a heterodimer with timeless (TIM); the complex then translocates into the nucleus. Post-translationally, phosphorylated with a circadian rhythmicity, probably by the double-time protein (dbt). Phosphorylation could be implicated in the stability of per monomer and in the formation of heterodimer per-tim.

The protein localises to the nucleus. It is found in the cytoplasm. Its subcellular location is the perinuclear region. Its function is as follows. Essential for biological clock functions. Determines the period length of circadian and ultradian rhythms; an increase in PER dosage leads to shortened circadian rhythms and a decrease leads to lengthened circadian rhythms. Essential for the circadian rhythmicity of locomotor activity, eclosion behavior, and for the rhythmic component of the male courtship song that originates in the thoracic nervous system. The biological cycle depends on the rhythmic formation and nuclear localization of the TIM-PER complex. Light induces the degradation of TIM, which promotes elimination of PER. Nuclear activity of the heterodimer coordinatively regulates PER and TIM transcription through a negative feedback loop. Behaves as a negative element in circadian transcriptional loop. Does not appear to bind DNA, suggesting indirect transcriptional inhibition. The protein is Period circadian protein (per) of Drosophila erecta (Fruit fly).